A 146-amino-acid chain; its full sequence is D-aminoacyl-tRNA deacylase (146 aa).

Positions 137–138 (GP) match the Gly-cisPro motif, important for rejection of L-amino acids motif.

Belongs to the DTD family. As to quaternary structure, homodimer.

It localises to the cytoplasm. It catalyses the reaction glycyl-tRNA(Ala) + H2O = tRNA(Ala) + glycine + H(+). The enzyme catalyses a D-aminoacyl-tRNA + H2O = a tRNA + a D-alpha-amino acid + H(+). In terms of biological role, an aminoacyl-tRNA editing enzyme that deacylates mischarged D-aminoacyl-tRNAs. Also deacylates mischarged glycyl-tRNA(Ala), protecting cells against glycine mischarging by AlaRS. Acts via tRNA-based rather than protein-based catalysis; rejects L-amino acids rather than detecting D-amino acids in the active site. By recycling D-aminoacyl-tRNA to D-amino acids and free tRNA molecules, this enzyme counteracts the toxicity associated with the formation of D-aminoacyl-tRNA entities in vivo and helps enforce protein L-homochirality. The chain is D-aminoacyl-tRNA deacylase from Variovorax paradoxus (strain S110).